Reading from the N-terminus, the 668-residue chain is Kinesin-like protein KIF2B (668 aa).

Threonine 125 is modified (phosphothreonine; by PLK1). The stretch at 149-177 (CLREIEKLQKQREKRRRLQLEIRARRALD) forms a coiled coil. Serine 204 carries the post-translational modification Phosphoserine; by PLK1. The Kinesin motor domain maps to 213 to 543 (RICVCVRKRP…LRYANRVKEL (331 aa)). 303-310 (GQTGSGKT) serves as a coordination point for ATP. The span at 585-604 (PTVEKEEEKESDELTSKKEP) shows a compositional bias: basic and acidic residues. Residues 585 to 605 (PTVEKEEEKESDELTSKKEPA) form a disordered region. Residues 646–667 (VLTDIQKKLQSLREDLQKKSQV) are a coiled coil.

Belongs to the TRAFAC class myosin-kinesin ATPase superfamily. Kinesin family. MCAK/KIF2 subfamily. Post-translationally, phosphorylation at Thr-125 by PLK1 is required for activity in the correction of kinetochore-microtubules attachment errors, while phosphorylation at Ser-204 also by PLK1 is required for the kinetochore localization and activity in prometaphase.

It is found in the cytoplasm. It localises to the cytoskeleton. Its subcellular location is the microtubule organizing center. The protein localises to the centrosome. The protein resides in the spindle. It is found in the chromosome. It localises to the centromere. Its subcellular location is the kinetochore. In terms of biological role, plus end-directed microtubule-dependent motor required for spindle assembly and chromosome movement during mitosis. Has microtubule depolymerization activity. Plays a role in chromosome congression. This Mus musculus (Mouse) protein is Kinesin-like protein KIF2B (Kif2b).